The chain runs to 566 residues: Protein pacG (566 aa).

The NDT80 DNA-binding region spans 79 to 326 (TSFDPPPPAE…RSPRNFQSRK (248 aa)). Disordered regions lie at residues 314 to 422 (VRGR…EAHR) and 448 to 470 (DSRPHTSFSNDLASKSLSVDSGR). Over residues 333 to 349 (SAAASRKNAQAAAASNN) the composition is skewed to low complexity. Composition is skewed to polar residues over residues 365–391 (VKSSSPETSSNGVPQQSPPNWALATNS), 403–413 (HSSVYSQSSPE), and 452–466 (HTSFSNDLASKSLSV).

The protein resides in the nucleus. The protein localises to the cytoplasm. Transcription factor that acts as a positive regulator of nonrepressible acid phosphatase activity. Is a major regulator of responses to nitrogen and carbon starvation and is essential for the expression of genes involved in vegetative incompatibility (like pin-c, het-6, and tol). Vegetative incompatibility is a non-self-recognition system ubiquitous in filamentous fungi which results in programmed cell death. The sequence is that of Protein pacG (pacG) from Emericella nidulans (strain FGSC A4 / ATCC 38163 / CBS 112.46 / NRRL 194 / M139) (Aspergillus nidulans).